The following is a 162-amino-acid chain: Transcription elongation factor GreA (162 aa).

Positions 45 to 74 (ENAEYEAAREKQAFIEGRIKELEDMTARAE) form a coiled coil.

This sequence belongs to the GreA/GreB family.

Functionally, necessary for efficient RNA polymerase transcription elongation past template-encoded arresting sites. The arresting sites in DNA have the property of trapping a certain fraction of elongating RNA polymerases that pass through, resulting in locked ternary complexes. Cleavage of the nascent transcript by cleavage factors such as GreA or GreB allows the resumption of elongation from the new 3'terminus. GreA releases sequences of 2 to 3 nucleotides. This Rickettsia prowazekii (strain Madrid E) protein is Transcription elongation factor GreA.